Here is a 348-residue protein sequence, read N- to C-terminus: tRNA N6-adenosine threonylcarbamoyltransferase (348 aa).

2 residues coordinate Fe cation: His115 and His119. Substrate contacts are provided by residues 138–142 (LVSGG), Asp171, Gly184, and Asn278. Residue Asp306 participates in Fe cation binding.

This sequence belongs to the KAE1 / TsaD family. Requires Fe(2+) as cofactor.

It is found in the cytoplasm. It carries out the reaction L-threonylcarbamoyladenylate + adenosine(37) in tRNA = N(6)-L-threonylcarbamoyladenosine(37) in tRNA + AMP + H(+). Functionally, required for the formation of a threonylcarbamoyl group on adenosine at position 37 (t(6)A37) in tRNAs that read codons beginning with adenine. Is involved in the transfer of the threonylcarbamoyl moiety of threonylcarbamoyl-AMP (TC-AMP) to the N6 group of A37, together with TsaE and TsaB. TsaD likely plays a direct catalytic role in this reaction. The sequence is that of tRNA N6-adenosine threonylcarbamoyltransferase from Methylibium petroleiphilum (strain ATCC BAA-1232 / LMG 22953 / PM1).